Here is a 97-residue protein sequence, read N- to C-terminus: Protein MxiI (97 aa).

To S.typhimurium PrgJ.

In terms of biological role, necessary for the secretion of IPA invasins. The sequence is that of Protein MxiI (mxiI) from Shigella flexneri.